Consider the following 374-residue polypeptide: SKP1-interacting partner 15 (374 aa).

An F-box domain is found at Ser3 to Ile48.

Part of a SCF (ASK-cullin-F-box) protein ligase complex. Interacts with SKP1A/ASK1, SKP1B/ASK2, ASK11 and ASK13.

It is found in the nucleus. The protein operates within protein modification; protein ubiquitination. Component of SCF(ASK-cullin-F-box) E3 ubiquitin ligase complexes, which may mediate the ubiquitination and subsequent proteasomal degradation of target proteins. This is SKP1-interacting partner 15 (SKIP15) from Arabidopsis thaliana (Mouse-ear cress).